We begin with the raw amino-acid sequence, 82 residues long: Small ribosomal subunit protein bS16 (82 aa).

Belongs to the bacterial ribosomal protein bS16 family.

This is Small ribosomal subunit protein bS16 from Pectobacterium atrosepticum (strain SCRI 1043 / ATCC BAA-672) (Erwinia carotovora subsp. atroseptica).